The primary structure comprises 147 residues: FAD synthase (147 aa).

ATP-binding positions include Thr13 to Phe14, His18 to His21, Asp100, and Phe127.

The protein belongs to the archaeal FAD synthase family. As to quaternary structure, homodimer. The cofactor is a divalent metal cation.

It carries out the reaction FMN + ATP + H(+) = FAD + diphosphate. The protein operates within cofactor biosynthesis; FAD biosynthesis; FAD from FMN: step 1/1. Functionally, catalyzes the transfer of the AMP portion of ATP to flavin mononucleotide (FMN) to produce flavin adenine dinucleotide (FAD) coenzyme. The chain is FAD synthase from Korarchaeum cryptofilum (strain OPF8).